The primary structure comprises 532 residues: Collagen alpha-1(XXIII) chain (532 aa).

Residues 1–23 are Cytoplasmic-facing; the sequence is MGAGERAAGGGGAQDPGAGCGSR. Residues 24–45 traverse the membrane as a helical; Signal-anchor for type II membrane protein segment; that stretch reads ALSALCLLLSVGSAAACLLLGA. At 46-532 the chain is on the extracellular side; the sequence is QAAALHGRVA…GLPVPGCWHK (487 aa). Disordered stretches follow at residues 102–296 and 308–532; these read PSEC…GEQG and LDAL…CWHK. Collagen-like domains lie at 108–166, 173–232, 240–298, and 313–372; these read PPGP…RGAQ, GPPG…PGKK, QPGL…QGDT, and GPPG…MGLS. Low complexity predominate over residues 129 to 145; it reads QSGRDGYPGPLGLDGKP. Pro residues predominate over residues 174 to 184; that stretch reads PPGPPGPPGAR. Over residues 196–207 the composition is skewed to low complexity; it reads RGAQGPAGPRGE. Residues 314-326 are compositionally biased toward pro residues; it reads PPGPQGAPGPPGI. Basic and acidic residues-rich tracts occupy residues 342-354 and 380-393; these read DGEK…KGDP and PKGE…DHLQ. The span at 403–414 shows a compositional bias: pro residues; that stretch reads PGPPGPPGPPGP. Collagen-like domains are found at residues 404–452 and 455–514; these read GPPG…GPPG and GLPG…PGLD. Basic and acidic residues-rich tracts occupy residues 427 to 441 and 478 to 495; these read DGAK…ERGP and RGEK…ERGV.

In terms of assembly, homotrimer. In terms of processing, undergoes proteolytic cleavage by furin protease to yield a 60 kDa soluble form that forms a homotrimer and exhibits a low affinity interaction with heparin.

It is found in the cell membrane. This is Collagen alpha-1(XXIII) chain (Col23a1) from Mus musculus (Mouse).